The following is a 615-amino-acid chain: Pentatricopeptide repeat-containing protein At2g25580 (615 aa).

The segment at 40-98 (FGNSNDSSEMNPREGYNGRIQNRTGSSGEVSESIHTQSQSLGSNQGRNEQSWKQSPSLS) is disordered. Polar residues predominate over residues 58–98 (RIQNRTGSSGEVSESIHTQSQSLGSNQGRNEQSWKQSPSLS). PPR repeat units lie at residues 288–318 (DLSS…MSEK), 319–353 (NLET…GNIP), 354–389 (DGQL…GIAP), and 390–420 (SIED…MPME). The tract at residues 490–520 (SSMQEFRAGDTNLPENDELFQLLRNLKMHMV) is type E(+) motif. The interval 521–615 (EVGYVAETRM…NGACTCKDYW (95 aa)) is type DYW motif.

It belongs to the PPR family. PCMP-H subfamily.

In Arabidopsis thaliana (Mouse-ear cress), this protein is Pentatricopeptide repeat-containing protein At2g25580 (PCMP-H75).